A 410-amino-acid polypeptide reads, in one-letter code: Subtilisin-like protease CPC735_003880 (410 aa).

The first 17 residues, 1 to 17 (MKLLKSSLLLLLPFVTA), serve as a signal peptide directing secretion. A propeptide spanning residues 18–118 (NPIPSEDKDI…VTPDRKVYLA (101 aa)) is cleaved from the precursor. An Inhibitor I9 domain is found at 31–118 (RYIVTLKDGI…VTPDRKVYLA (88 aa)). Residues 127 to 410 (GYNLGHMSSK…IQEMNETVIA (284 aa)) form the Peptidase S8 domain. The active-site Charge relay system is D159. Residue N182 is glycosylated (N-linked (GlcNAc...) asparagine). H191 functions as the Charge relay system in the catalytic mechanism. N-linked (GlcNAc...) asparagine glycosylation is found at N238, N251, and N338. Catalysis depends on S347, which acts as the Charge relay system. N405 carries N-linked (GlcNAc...) asparagine glycosylation.

The protein belongs to the peptidase S8 family.

It is found in the secreted. Functionally, secreted subtilisin-like serine protease with keratinolytic activity that contributes to pathogenicity. This chain is Subtilisin-like protease CPC735_003880, found in Coccidioides posadasii (strain C735) (Valley fever fungus).